Reading from the N-terminus, the 344-residue chain is Arginine N-succinyltransferase (344 aa).

Leu-125 lines the succinyl-CoA pocket. Catalysis depends on His-229, which acts as the Proton donor.

This sequence belongs to the arginine N-succinyltransferase family.

It carries out the reaction succinyl-CoA + L-arginine = N(2)-succinyl-L-arginine + CoA + H(+). The protein operates within amino-acid degradation; L-arginine degradation via AST pathway; L-glutamate and succinate from L-arginine: step 1/5. Its function is as follows. Catalyzes the transfer of succinyl-CoA to arginine to produce N(2)-succinylarginine. The sequence is that of Arginine N-succinyltransferase from Escherichia coli (strain UTI89 / UPEC).